The chain runs to 667 residues: Flavin-dependent halogenase malA (667 aa).

Positions 48, 70, 79, and 82 each coordinate FAD. The active site involves Lys108. FAD-binding residues include Arg144, Val168, Asp399, and Ile412. Glu494 contributes to the substrate binding site. The Zn(2+) site is built by Cys597, Cys600, Cys613, and Cys616. Positions 621-646 (TEPQTAVTFDPPLTAEEEALLYAAWN) are flexible region.

This sequence belongs to the flavin-dependent halogenase family. Zn(2+) is required as a cofactor.

It catalyses the reaction (+)-premalbrancheamide + 2 FAD + 2 chloride + 4 H(+) = (+)-malbrancheamide + 2 FADH2. It carries out the reaction (+)-premalbrancheamide + FAD + chloride + 2 H(+) = (+)-malbrancheamide B + FADH2. The catalysed reaction is (+)-premalbrancheamide + FAD + chloride + 2 H(+) = (+)-isomalbrancheamide B + FADH2. The enzyme catalyses (+)-malbrancheamide B + FAD + chloride + 2 H(+) = (+)-malbrancheamide + FADH2. It catalyses the reaction (+)-isomalbrancheamide B + FAD + chloride + 2 H(+) = (+)-malbrancheamide + FADH2. It carries out the reaction (+)-premalbrancheamide + bromide + FAD + 2 H(+) = (+)-malbrancheamide C + FADH2. The catalysed reaction is (+)-premalbrancheamide + bromide + FAD + 2 H(+) = (+)-isomalbrancheamide C + FADH2. The enzyme catalyses (+)-malbrancheamide B + bromide + FAD + 2 H(+) = (+)-malbrancheamide D + FADH2. It catalyses the reaction (+)-isomalbrancheamide B + bromide + FAD + 2 H(+) = (+)-isomalbrancheamide D + FADH2. It participates in alkaloid biosynthesis. In terms of biological role, flavin-dependent halogenase; part of the gene cluster that mediates the biosynthesis of malbrancheamide, a dichlorinated fungal indole alkaloid that belongs to a family of natural products containing a characteristic bicyclo[2.2.2]diazaoctane core. The first step of malbrancheamide biosynthesis involves coupling of L-proline and L-tryptophan by malG, a bimodular NRPS, to produce L-Pro-L-Trp aldehyde through reductive offloading. This compound undergoes spontaneous cyclization and dehydration to give a dienamine which is reverse prenylated at C-2 by malE. The other prenyltransferase present in the cluster, malB, displays modest activity, suggesting that may be a redundant gene in the pathway. Subsequently, a [4+2] Diels-Alder cyclo-addition catalyzed by the bifunctional enzyme malC forms the characteristic bicyclo[2.2.2]diazaoctane ring of premalbrancheamid. Finally, the flavin-dependent halogenase malA catalyzes the iterative dichlorination of the indole ring of premalbrancheamide to yield C-9 monochlorinated malbrancheamide B, C-8 monochlorinated isomalbrancheamide B, and dichlorinated malbrancheamide. MalA is also able to brominate premalbrancheamide at C-9 to yield malbrancheamide C, and, to a lesser extend, at C-8 to yield isomalbrancheamide C. Finally, malA can brominate C-9 monochlorinated malbrancheamide B at C-8 to yield malbrancheamide D, or C-8 monochlorinated isomalbrancheamide B at C-9 to produce isomalbrancheamide D. This chain is Flavin-dependent halogenase malA, found in Malbranchea aurantiaca.